The primary structure comprises 278 residues: uncharacterized protein (278 aa).

Residues 112–113 (HI), 191–193 (VGR), and aspartate 217 contribute to the NAD(+) site. Arginine 193 is a catalytic residue. Residue glutamate 222 is part of the active site. Residue histidine 241 is the Proton donor of the active site. 241–244 (HSAG) serves as a coordination point for NAD(+).

The protein belongs to the D-isomer specific 2-hydroxyacid dehydrogenase family.

This is an uncharacterized protein from Streptomyces coelicolor.